The sequence spans 251 residues: Small ribosomal subunit protein uS3 (251 aa).

The region spanning 39–112 (IRKYINEVYA…NIILNVVEVR (74 aa)) is the KH type-2 domain. The interval 222-251 (EEKKPAKKFNKKPVAAKPANKEEKSSKEVK) is disordered. The span at 240–251 (ANKEEKSSKEVK) shows a compositional bias: basic and acidic residues.

The protein belongs to the universal ribosomal protein uS3 family. As to quaternary structure, part of the 30S ribosomal subunit. Forms a tight complex with proteins S10 and S14.

Functionally, binds the lower part of the 30S subunit head. Binds mRNA in the 70S ribosome, positioning it for translation. The protein is Small ribosomal subunit protein uS3 of Anaeroplasma abactoclasticum.